The sequence spans 231 residues: Fibronectin type III domain-containing protein 4 (231 aa).

An N-terminal signal peptide occupies residues 1 to 40 (MPLAPPANSVETMASLMPLSPYLSPTVLLLVSCDLGFVRA). At 41–163 (DRPPSPVNVT…GLDGERPLQT (123 aa)) the chain is on the extracellular side. A Fibronectin type-III domain is found at 43 to 136 (PPSPVNVTVT…PRVHFRTLKG (94 aa)). 2 N-linked (GlcNAc...) asparagine glycosylation sites follow: Asn48 and Asn143. The disordered stretch occupies residues 118-156 (GLRGESPPGPRVHFRTLKGSDRLPSNSSSPGDITVEGLD). The chain crosses the membrane as a helical span at residues 164–184 (GEVVIIVVVLLMWAAVIGLFC). The Cytoplasmic portion of the chain corresponds to 185 to 231 (RQYDIIKDNDSNNNPKEKGKGPEQSPQGRPVGTTRQKKSPSINTIDV). Positions 193-205 (NDSNNNPKEKGKG) are enriched in basic and acidic residues. Residues 193–231 (NDSNNNPKEKGKGPEQSPQGRPVGTTRQKKSPSINTIDV) are disordered.

In terms of tissue distribution, predominantly expressed in the liver and in the brain, including in the cortex, hypothalamus and hippocampus. Also expressed in heart, lung, kidney and testis. In the colon, expressed in the epithelium and in a subset of immune cells in lymphoid aggregates.

Its subcellular location is the membrane. The protein resides in the secreted. In terms of biological role, has anti-inflammatory properties. In the colon, acts on macrophages to down-regulate inflammation. May suppress osteoclastogenesis and mature osteoclast resorptive function. In white adipose tissue, decreases local inflammation, via interaction with GPR116. Also required for proper systemic glucose tolerance, specifically sensitizing white adipocytes to insulin and promoting glucose uptake. The insulin sensitizing function in adipose tissue is mediated by interaction with ADGRF5/GPR116 and activation of cAMP signaling. The chain is Fibronectin type III domain-containing protein 4 (Fndc4) from Mus musculus (Mouse).